A 348-amino-acid chain; its full sequence is Anthranilate phosphoribosyltransferase (348 aa).

Residues G87, 90-91 (GD), T95, 97-100 (NIST), 115-123 (KHGNRSASG), and S127 each bind 5-phospho-alpha-D-ribose 1-diphosphate. G87 is an anthranilate binding site. Residue S99 coordinates Mg(2+). N118 contributes to the anthranilate binding site. R173 serves as a coordination point for anthranilate. Positions 232 and 233 each coordinate Mg(2+).

Belongs to the anthranilate phosphoribosyltransferase family. Homodimer. Mg(2+) is required as a cofactor.

It catalyses the reaction N-(5-phospho-beta-D-ribosyl)anthranilate + diphosphate = 5-phospho-alpha-D-ribose 1-diphosphate + anthranilate. It functions in the pathway amino-acid biosynthesis; L-tryptophan biosynthesis; L-tryptophan from chorismate: step 2/5. In terms of biological role, catalyzes the transfer of the phosphoribosyl group of 5-phosphorylribose-1-pyrophosphate (PRPP) to anthranilate to yield N-(5'-phosphoribosyl)-anthranilate (PRA). The polypeptide is Anthranilate phosphoribosyltransferase (Synechococcus sp. (strain CC9311)).